The sequence spans 479 residues: Aspartyl/glutamyl-tRNA(Asn/Gln) amidotransferase subunit B (479 aa).

This sequence belongs to the GatB/GatE family. GatB subfamily. As to quaternary structure, heterotrimer of A, B and C subunits.

It catalyses the reaction L-glutamyl-tRNA(Gln) + L-glutamine + ATP + H2O = L-glutaminyl-tRNA(Gln) + L-glutamate + ADP + phosphate + H(+). The catalysed reaction is L-aspartyl-tRNA(Asn) + L-glutamine + ATP + H2O = L-asparaginyl-tRNA(Asn) + L-glutamate + ADP + phosphate + 2 H(+). Functionally, allows the formation of correctly charged Asn-tRNA(Asn) or Gln-tRNA(Gln) through the transamidation of misacylated Asp-tRNA(Asn) or Glu-tRNA(Gln) in organisms which lack either or both of asparaginyl-tRNA or glutaminyl-tRNA synthetases. The reaction takes place in the presence of glutamine and ATP through an activated phospho-Asp-tRNA(Asn) or phospho-Glu-tRNA(Gln). This is Aspartyl/glutamyl-tRNA(Asn/Gln) amidotransferase subunit B from Mesoplasma florum (strain ATCC 33453 / NBRC 100688 / NCTC 11704 / L1) (Acholeplasma florum).